Consider the following 671-residue polypeptide: UBA domain-containing protein RUP1 (671 aa).

Positions 1–41 (MMDNQAVKSLLEMGIPHEVAVDALQRTGGNLEAAVNFIFSN) constitute a UBA domain. Phosphoserine is present on Ser-56. The interval 68–87 (GTKPCDVPNNGDQDIDMPDV) is disordered. Residues 432-501 (SKRKQARTRS…LNSARAAKME (70 aa)) adopt a coiled-coil conformation. Positions 643–671 (DGMGDPEQATNNINNGNDNDNDDDIDSDN) are disordered. The segment covering 661–671 (NDNDDDIDSDN) has biased composition (acidic residues).

In terms of assembly, forms a ternary complex with RSP5 and UBP2.

It is found in the cytoplasm. The protein localises to the nucleus. In terms of biological role, modulates the activity of the RSP5 HECT ubiquitin-protein ligase through its mediation of the interaction between RSP5 and the deubiquitinase UBP2. Involved in regulation of cell wall homeostasis. The protein is UBA domain-containing protein RUP1 (RUP1) of Saccharomyces cerevisiae (strain ATCC 204508 / S288c) (Baker's yeast).